Here is a 419-residue protein sequence, read N- to C-terminus: Serine--tRNA ligase (419 aa).

An L-serine-binding site is contributed by Thr226–Glu228. ATP contacts are provided by residues Arg257–Glu259 and Val273. Glu280 contacts L-serine. ATP is bound at residue Glu344–Ser347. Thr379 is an L-serine binding site.

This sequence belongs to the class-II aminoacyl-tRNA synthetase family. Type-1 seryl-tRNA synthetase subfamily. Homodimer. The tRNA molecule binds across the dimer.

The protein localises to the cytoplasm. It catalyses the reaction tRNA(Ser) + L-serine + ATP = L-seryl-tRNA(Ser) + AMP + diphosphate + H(+). The enzyme catalyses tRNA(Sec) + L-serine + ATP = L-seryl-tRNA(Sec) + AMP + diphosphate + H(+). It functions in the pathway aminoacyl-tRNA biosynthesis; selenocysteinyl-tRNA(Sec) biosynthesis; L-seryl-tRNA(Sec) from L-serine and tRNA(Sec): step 1/1. Catalyzes the attachment of serine to tRNA(Ser). Is also able to aminoacylate tRNA(Sec) with serine, to form the misacylated tRNA L-seryl-tRNA(Sec), which will be further converted into selenocysteinyl-tRNA(Sec). This chain is Serine--tRNA ligase, found in Corynebacterium efficiens (strain DSM 44549 / YS-314 / AJ 12310 / JCM 11189 / NBRC 100395).